Reading from the N-terminus, the 368-residue chain is Transcription factor bHLH30 (368 aa).

A coiled-coil region spans residues Ala3 to Phe30. Positions Ala173 to Leu222 constitute a bHLH domain. The tract at residues Lys333–Arg368 is disordered. Over residues Glu337–Arg368 the composition is skewed to polar residues.

Homodimer. Interacts with LHW.

The protein resides in the nucleus. This chain is Transcription factor bHLH30 (BHLH30), found in Arabidopsis thaliana (Mouse-ear cress).